The chain runs to 117 residues: Large ribosomal subunit protein uL18 (117 aa).

The protein belongs to the universal ribosomal protein uL18 family. Part of the 50S ribosomal subunit; part of the 5S rRNA/L5/L18/L25 subcomplex. Contacts the 5S and 23S rRNAs.

In terms of biological role, this is one of the proteins that bind and probably mediate the attachment of the 5S RNA into the large ribosomal subunit, where it forms part of the central protuberance. In Thiobacillus denitrificans (strain ATCC 25259 / T1), this protein is Large ribosomal subunit protein uL18.